Consider the following 336-residue polypeptide: Cinnamoyl-CoA reductase 2 (336 aa).

Residues 21-27 (GAGGFIA), arginine 46, lysine 52, 72-73 (DL), 92-94 (TAS), tyrosine 165, lysine 169, 192-195 (PVVV), and serine 207 contribute to the NADP(+) site. Cysteine 158 and cysteine 166 are joined by a disulfide. Lysine 169 (proton donor) is an active-site residue.

This sequence belongs to the NAD(P)-dependent epimerase/dehydratase family. Dihydroflavonol-4-reductase subfamily. The formation of a reversible disulfide bond reduces activity by perturbing the positioning of nearby catalytic residues. In terms of tissue distribution, mainly expressed in roots and stems, especially at the second internode and, to a lower extent, in leaves and flowers. Localized in vascular elements, with weaker expression in the interfascicular (xylem fiber) region.

The protein resides in the cytoplasm. The enzyme catalyses (E)-coniferaldehyde + NADP(+) + CoA = (E)-feruloyl-CoA + NADPH + H(+). The catalysed reaction is (E)-4-coumaraldehyde + NADP(+) + CoA = (E)-4-coumaroyl-CoA + NADPH + H(+). It catalyses the reaction (E)-sinapaldehyde + NADP(+) + CoA = (E)-sinapoyl-CoA + NADPH + H(+). It carries out the reaction (E)-cinnamaldehyde + NADP(+) + CoA = (E)-cinnamoyl-CoA + NADPH + H(+). The enzyme catalyses (E)-caffeyl aldehyde + NADP(+) + CoA = (E)-caffeoyl-CoA + NADPH + H(+). The protein operates within aromatic compound metabolism; phenylpropanoid biosynthesis. Involved in the latter stages of lignin biosynthesis. Catalyzes one of the last steps of monolignol biosynthesis, the conversion of cinnamoyl-CoAs into their corresponding cinnamaldehydes. Mediates the conversion of caffeoyl-CoA and coumaroyl-CoA to caffaldehyde and coumaraldehyde, respectively. Also active, with a lower efficiency, toward feruloyl-CoA and sinapoyl-CoA. Involved in the production of floral volatile phenylpropanoids in flowers of fragrant cultivars from cinnamic acid, a common precursor with the anthocyanin biosynthesis pathway involved in flower pigmentation. This chain is Cinnamoyl-CoA reductase 2, found in Medicago truncatula (Barrel medic).